The sequence spans 502 residues: 4,4'-diaponeurosporene oxygenase (502 aa).

8–20 lines the FAD pocket; it reads IIGGGLGGISAAI.

The protein belongs to the carotenoid/retinoid oxidoreductase family. CrtP subfamily. The cofactor is FAD.

The enzyme catalyses all-trans-4,4'-diaponeurosporene + 2 AH2 + 2 O2 = 4,4'-diaponeurosporenal + 2 A + 3 H2O. It functions in the pathway carotenoid biosynthesis; staphyloxanthin biosynthesis; staphyloxanthin from farnesyl diphosphate: step 3/5. Its function is as follows. Involved in the biosynthesis of the yellow-orange carotenoid staphyloxanthin, which plays a role in the virulence via its protective function against oxidative stress. Catalyzes the oxidation of the terminal methyl side group of 4,4'-diaponeurosporene to form 4,4'-diaponeurosporen-4-al. The protein is 4,4'-diaponeurosporene oxygenase of Staphylococcus haemolyticus (strain JCSC1435).